A 436-amino-acid chain; its full sequence is GTPase Der (436 aa).

2 consecutive EngA-type G domains span residues 3–167 and 177–352; these read NIVA…PIKP and PRFA…ENRQ. GTP-binding positions include 9–16, 56–60, 119–122, 183–190, 230–234, and 295–298; these read GRPNVGKS, DTGGY, NKVD, GRPNAGKS, DTAGI, and NKWD. Residues 353-436 enclose the KH-like domain; sequence QRISTSKFNE…VPIDIYIREK (84 aa).

Belongs to the TRAFAC class TrmE-Era-EngA-EngB-Septin-like GTPase superfamily. EngA (Der) GTPase family. As to quaternary structure, associates with the 50S ribosomal subunit.

GTPase that plays an essential role in the late steps of ribosome biogenesis. This is GTPase Der from Flavobacterium psychrophilum (strain ATCC 49511 / DSM 21280 / CIP 103535 / JIP02/86).